The primary structure comprises 73 residues: NAD(P)H-quinone oxidoreductase subunit L (73 aa).

A run of 2 helical transmembrane segments spans residues 7–27 (LIGL…PFLF) and 44–64 (VLMF…APFM).

Belongs to the complex I NdhL subunit family. As to quaternary structure, NDH-1 can be composed of about 15 different subunits; different subcomplexes with different compositions have been identified which probably have different functions.

It localises to the cellular thylakoid membrane. It catalyses the reaction a plastoquinone + NADH + (n+1) H(+)(in) = a plastoquinol + NAD(+) + n H(+)(out). It carries out the reaction a plastoquinone + NADPH + (n+1) H(+)(in) = a plastoquinol + NADP(+) + n H(+)(out). In terms of biological role, NDH-1 shuttles electrons from an unknown electron donor, via FMN and iron-sulfur (Fe-S) centers, to quinones in the respiratory and/or the photosynthetic chain. The immediate electron acceptor for the enzyme in this species is believed to be plastoquinone. Couples the redox reaction to proton translocation, and thus conserves the redox energy in a proton gradient. Cyanobacterial NDH-1 also plays a role in inorganic carbon-concentration. This chain is NAD(P)H-quinone oxidoreductase subunit L, found in Synechococcus sp. (strain JA-3-3Ab) (Cyanobacteria bacterium Yellowstone A-Prime).